A 445-amino-acid chain; its full sequence is Phosphoglucosamine mutase (445 aa).

Residue S101 is the Phosphoserine intermediate of the active site. Mg(2+) contacts are provided by S101, D240, D242, and D244. At S101 the chain carries Phosphoserine.

It belongs to the phosphohexose mutase family. Mg(2+) is required as a cofactor. In terms of processing, activated by phosphorylation.

The catalysed reaction is alpha-D-glucosamine 1-phosphate = D-glucosamine 6-phosphate. Catalyzes the conversion of glucosamine-6-phosphate to glucosamine-1-phosphate. The protein is Phosphoglucosamine mutase of Pseudomonas fluorescens (strain ATCC BAA-477 / NRRL B-23932 / Pf-5).